The chain runs to 327 residues: Tetraacyldisaccharide 4'-kinase (327 aa).

54–61 (TTGGTGKT) is an ATP binding site. The segment at 78 to 106 (PHILSRGHGGRERGPIGVNPNRSTPRDVG) is disordered.

This sequence belongs to the LpxK family.

The enzyme catalyses a lipid A disaccharide + ATP = a lipid IVA + ADP + H(+). The protein operates within glycolipid biosynthesis; lipid IV(A) biosynthesis; lipid IV(A) from (3R)-3-hydroxytetradecanoyl-[acyl-carrier-protein] and UDP-N-acetyl-alpha-D-glucosamine: step 6/6. Transfers the gamma-phosphate of ATP to the 4'-position of a tetraacyldisaccharide 1-phosphate intermediate (termed DS-1-P) to form tetraacyldisaccharide 1,4'-bis-phosphate (lipid IVA). The sequence is that of Tetraacyldisaccharide 4'-kinase from Gluconobacter oxydans (strain 621H) (Gluconobacter suboxydans).